The chain runs to 364 residues: 4-hydroxythreonine-4-phosphate dehydrogenase (364 aa).

The substrate site is built by His148 and Thr149. Positions 177, 216, and 301 each coordinate a divalent metal cation. 3 residues coordinate substrate: Lys309, Asn318, and Arg327.

This sequence belongs to the PdxA family. As to quaternary structure, homodimer. Zn(2+) serves as cofactor. Mg(2+) is required as a cofactor. It depends on Co(2+) as a cofactor.

The protein resides in the cytoplasm. The enzyme catalyses 4-(phosphooxy)-L-threonine + NAD(+) = 3-amino-2-oxopropyl phosphate + CO2 + NADH. The protein operates within cofactor biosynthesis; pyridoxine 5'-phosphate biosynthesis; pyridoxine 5'-phosphate from D-erythrose 4-phosphate: step 4/5. Catalyzes the NAD(P)-dependent oxidation of 4-(phosphooxy)-L-threonine (HTP) into 2-amino-3-oxo-4-(phosphooxy)butyric acid which spontaneously decarboxylates to form 3-amino-2-oxopropyl phosphate (AHAP). This chain is 4-hydroxythreonine-4-phosphate dehydrogenase, found in Campylobacter jejuni subsp. jejuni serotype O:2 (strain ATCC 700819 / NCTC 11168).